The sequence spans 352 residues: D-alanine--D-alanine ligase (352 aa).

The region spanning 133-342 (KTVFAAAGLP…FPKLVDRLIQ (210 aa)) is the ATP-grasp domain. 169–224 (DETIGYPNFVKPANLGSSVGISKVRSRLELEAALDSAASFDRRIVVEAGVVAREVE) contributes to the ATP binding site. Residues Asp295, Glu309, and Asn311 each contribute to the Mg(2+) site.

The protein belongs to the D-alanine--D-alanine ligase family. It depends on Mg(2+) as a cofactor. Mn(2+) is required as a cofactor.

The protein localises to the cytoplasm. The catalysed reaction is 2 D-alanine + ATP = D-alanyl-D-alanine + ADP + phosphate + H(+). It functions in the pathway cell wall biogenesis; peptidoglycan biosynthesis. Functionally, cell wall formation. This Acaryochloris marina (strain MBIC 11017) protein is D-alanine--D-alanine ligase.